The primary structure comprises 319 residues: Vesicle-associated membrane protein-associated protein scs22 (319 aa).

The region spanning 1–121 is the MSP domain; the sequence is MALECDSTIV…SERKIRCVYS (121 aa). Residues 1 to 298 lie on the Cytoplasmic side of the membrane; the sequence is MALECDSTIV…GAKVVPQIHN (298 aa). Positions 127–150 are enriched in low complexity; that stretch reads ANAHANAHHQPAQTTTTSIPTSAT. The tract at residues 127 to 244 is disordered; it reads ANAHANAHHQ…TTSPNNENNA (118 aa). Polar residues-rich tracts occupy residues 151–165, 185–201, and 231–244; these read DNYT…QSYS, STAT…SAVS, and SVPT…ENNA. Threonine 236 carries the post-translational modification Phosphothreonine. A phosphoserine mark is found at serine 237 and serine 281. The helical; Anchor for type IV membrane protein transmembrane segment at 299 to 319 threads the bilayer; it reads TVTVQTAFLLAIICFLIGLLF.

The protein belongs to the VAMP-associated protein (VAP) (TC 9.B.17) family. In terms of assembly, interacts with epr1.

It is found in the endoplasmic reticulum membrane. In terms of biological role, vesicle-associated membrane protein-associated protein (VAP) implicated in maintaining the cortical endoplasmic reticulum (ER)-plasma membrane (PM) attachment. ER-PM contacts function to modulate the distribution of contractile ring components to ensure robust ring assembly. ER-PM contacts function also in controlling exocytosis and maintenance of cell polarity regulating cell shape. VAPs play an important role in regulating eisosome assembly. VAPs also contribute to ER-phagy by tethering atg8 to the ER membrane, but also by maintaining the ER-plasma membrane contact. The sequence is that of Vesicle-associated membrane protein-associated protein scs22 (scs22) from Schizosaccharomyces pombe (strain 972 / ATCC 24843) (Fission yeast).